The following is a 317-amino-acid chain: 4-diphosphocytidyl-2-C-methyl-D-erythritol kinase (317 aa).

Lys-11 is a catalytic residue. Position 99 to 109 (99 to 109 (PVAAGLAGGST)) interacts with ATP. Residue Asp-141 is part of the active site.

This sequence belongs to the GHMP kinase family. IspE subfamily.

The catalysed reaction is 4-CDP-2-C-methyl-D-erythritol + ATP = 4-CDP-2-C-methyl-D-erythritol 2-phosphate + ADP + H(+). The protein operates within isoprenoid biosynthesis; isopentenyl diphosphate biosynthesis via DXP pathway; isopentenyl diphosphate from 1-deoxy-D-xylulose 5-phosphate: step 3/6. Catalyzes the phosphorylation of the position 2 hydroxy group of 4-diphosphocytidyl-2C-methyl-D-erythritol. The sequence is that of 4-diphosphocytidyl-2-C-methyl-D-erythritol kinase from Trichormus variabilis (strain ATCC 29413 / PCC 7937) (Anabaena variabilis).